A 281-amino-acid polypeptide reads, in one-letter code: NADH--cytochrome b5 reductase 1 (281 aa).

The helical transmembrane segment at 13–33 (ILLGVFVAFVAVGAGAAYFLT) threads the bilayer. The AKR2A-binding sequence (ABS) required for mitochondrion outer membrane targeting signature appears at 34 to 40 (SSKKRRV). The FAD-binding FR-type domain occupies 45-149 (ENFKEFKLVK…KGPKGRFKYQ (105 aa)). FAD contacts are provided by residues 129–144 (REMR…GPKG) and 155–187 (AFGM…KVHL). Thr166 bears the Phosphothreonine mark.

The protein belongs to the flavoprotein pyridine nucleotide cytochrome reductase family. In terms of assembly, monomer. Interacts with AKR2A. Requires FAD as cofactor. Expressed in roots, stems, flowers and siliques. Detected in leaves.

The protein resides in the mitochondrion outer membrane. It carries out the reaction 2 Fe(III)-[cytochrome b5] + NADH = 2 Fe(II)-[cytochrome b5] + NAD(+) + H(+). Reductase transferring electrons from NADH to cytochrome b5. Required for the NADH-dependent electron transfer involved in the desaturation and hydroxylation of fatty acids and in the desaturation of sterol precursors. No activity with NADPH as electron donor. This is NADH--cytochrome b5 reductase 1 from Arabidopsis thaliana (Mouse-ear cress).